A 171-amino-acid polypeptide reads, in one-letter code: Odorant-binding protein 1b (171 aa).

Positions 1–19 (MMVKFLLLALVFGLAHVHA) are cleaved as a signal peptide. Disulfide bonds link cysteine 57–cysteine 61 and cysteine 76–cysteine 169.

It belongs to the calycin superfamily. Lipocalin family. In terms of assembly, may form a heterodimer with OBP1A. Post-translationally, the N-terminus may be blocked. Expressed in nasal mucosa (at protein level). Specifically detected in septal and lateral nasal glands.

It is found in the secreted. Functionally, binds the chemical odorant 2-isobutyl-3-methoxypyrazine. In Mus musculus (Mouse), this protein is Odorant-binding protein 1b.